The sequence spans 55 residues: Large ribosomal subunit protein bL33B (55 aa).

Belongs to the bacterial ribosomal protein bL33 family.

The chain is Large ribosomal subunit protein bL33B from Mycolicibacterium paratuberculosis (strain ATCC BAA-968 / K-10) (Mycobacterium paratuberculosis).